Here is an 850-residue protein sequence, read N- to C-terminus: Pro-neuregulin-2, membrane-bound isoform (850 aa).

Residues 1-96 (MRQVCCSALP…AAAAGGMRRD (96 aa)) form a disordered region. A propeptide spanning residues 1 to 111 (MRQVCCSALP…SMLLFGVSLA (111 aa)) is cleaved from the precursor. Over residues 20-59 (SSYSDSSSSSSERSSSSSSSSSESGSSSRSSSNNSSISRP) the composition is skewed to low complexity. Residues N52 and N53 are each glycosylated (N-linked (GlcNAc...) asparagine). Pro residues predominate over residues 60–74 (AAPPEPRPQQQPQPR). The segment covering 75 to 92 (SPAARRAAARSRAAAAGG) has biased composition (low complexity). Residues 112–405 (CYSPSLKSVQ…QKAEELYQKR (294 aa)) lie on the Extracellular side of the membrane. Residues N147, N278, and N346 are each glycosylated (N-linked (GlcNAc...) asparagine). In terms of domain architecture, Ig-like C2-type spans 237 to 332 (PKLKKMKSQT…RGRLYVNSVS (96 aa)). Intrachain disulfides connect C257–C311, C345–C359, C353–C370, and C372–C381. The EGF-like domain occupies 341–382 (HARKCNETAKSYCVNGGVCYYIEGINQLSCKCPNGFFGQRCL). A helical transmembrane segment spans residues 406 to 426 (VLTITGICVALLVVGIVCVVA). Residues 427-850 (YCKTKKQRKQ…PRAKQDSAPL (424 aa)) lie on the Cytoplasmic side of the membrane. 5 disordered regions span residues 492-535 (TFSG…DSQS), 566-585 (EERRRATAPPYHDSVDSLRD), 647-681 (LLRHPAPPGPGPGPGPGPGPGADMQRSYDSYYYPA), 700-788 (LPAS…DGAL), and 801-850 (AHDA…SAPL). Residues 494–506 (SGSHSCSPSHHCS) are compositionally biased toward low complexity. Residues 514 to 527 (HRHESHTWSLERSE) show a composition bias toward basic and acidic residues. A compositionally biased stretch (pro residues) spans 651-665 (PAPPGPGPGPGPGPG). The span at 750–767 (GLAAQRARAARDSLSLSS) shows a compositional bias: low complexity.

The protein belongs to the neuregulin family. As to quaternary structure, interacts with ERBB3 and ERBB4. Proteolytic cleavage close to the plasma membrane on the external face leads to the release of the soluble growth factor form. Post-translationally, extensive glycosylation precedes the proteolytic cleavage. Restricted to the cerebellum in the adult.

The protein resides in the cell membrane. It localises to the secreted. In terms of biological role, direct ligand for ERBB3 and ERBB4 tyrosine kinase receptors. Concomitantly recruits ERBB1 and ERBB2 coreceptors, resulting in ligand-stimulated tyrosine phosphorylation and activation of the ERBB receptors. May also promote the heterodimerization with the EGF receptor. The polypeptide is Pro-neuregulin-2, membrane-bound isoform (NRG2) (Homo sapiens (Human)).